Reading from the N-terminus, the 905-residue chain is Probable aromatic-L-amino-acid decarboxylase (905 aa).

Residues 250–296 (YLNPIIKTPPHNERVPKMKTNISKTRKKKGKVSDASKDSRPSETKKE) are disordered. Basic and acidic residues predominate over residues 280-296 (KVSDASKDSRPSETKKE). Residues Thr-492 and Ser-591 each coordinate pyridoxal 5'-phosphate. Lys-648 carries the post-translational modification N6-(pyridoxal phosphate)lysine. The tract at residues 861-905 (HTAEYADPPGKSNKSPQVAAKGELPSAAPPSSRTPNSDISEKSDR) is disordered. The segment covering 889–898 (PPSSRTPNSD) has biased composition (polar residues).

It belongs to the group II decarboxylase family. Homodimer. The cofactor is pyridoxal 5'-phosphate.

It catalyses the reaction L-dopa + H(+) = dopamine + CO2. The catalysed reaction is 5-hydroxy-L-tryptophan + H(+) = serotonin + CO2. The protein operates within catecholamine biosynthesis; dopamine biosynthesis; dopamine from L-tyrosine: step 2/2. Its function is as follows. Catalyzes the decarboxylation of L-3,4-dihydroxyphenylalanine (DOPA) to dopamine, L-5-hydroxytryptophan to serotonin and L-tryptophan to tryptamine. This is Probable aromatic-L-amino-acid decarboxylase (hdl-1) from Caenorhabditis elegans.